Reading from the N-terminus, the 331-residue chain is Ribosomal RNA small subunit methyltransferase H (331 aa).

S-adenosyl-L-methionine-binding positions include 38–40 (GGY), aspartate 56, phenylalanine 83, aspartate 100, and glutamine 107. A disordered region spans residues 287-331 (DEAELAENPRARSARLRVGVRTDAPAGKVDPQALGTPLIPKKGRR).

Belongs to the methyltransferase superfamily. RsmH family.

Its subcellular location is the cytoplasm. The enzyme catalyses cytidine(1402) in 16S rRNA + S-adenosyl-L-methionine = N(4)-methylcytidine(1402) in 16S rRNA + S-adenosyl-L-homocysteine + H(+). Functionally, specifically methylates the N4 position of cytidine in position 1402 (C1402) of 16S rRNA. The chain is Ribosomal RNA small subunit methyltransferase H from Cereibacter sphaeroides (strain KD131 / KCTC 12085) (Rhodobacter sphaeroides).